The chain runs to 537 residues: Synaptotagmin-C (537 aa).

Residues Met1–Asp52 lie on the Vesicular side of the membrane. Residues Ile53–Trp78 traverse the membrane as a helical segment. At Lys79–Val537 the chain is on the cytoplasmic side. Disordered regions lie at residues Pro92–His111 and Ile142–Thr200. A compositionally biased stretch (basic residues) spans His100–Ser110. Residues Lys143 to Ser174 are compositionally biased toward polar residues. Residues Glu228 to Ala477 form a phospholipid binding region. 2 C2 domains span residues Asn236–Arg357 and Asp368–His501. Ca(2+) is bound by residues Asp267, Asp273, Asp325, Phe326, Asp327, Ser330, Asp333, Asp399, Asp405, Asp459, and Asp461.

Belongs to the synaptotagmin family. As to quaternary structure, homodimer or homotrimer (possible). The cofactor is Ca(2+).

It localises to the cytoplasmic vesicle. Its subcellular location is the secretory vesicle. The protein resides in the synaptic vesicle membrane. It is found in the synapse. Its function is as follows. May have a regulatory role in the membrane interactions during trafficking of synaptic vesicles at the active zone of the synapse. It binds acidic phospholipids with a specificity that requires the presence of both an acidic head group and a diacyl backbone. The sequence is that of Synaptotagmin-C (P65-C) from Diplobatis ommata (Ocellated electric ray).